Here is a 142-residue protein sequence, read N- to C-terminus: Putative pre-16S rRNA nuclease (142 aa).

Belongs to the YqgF nuclease family.

Its subcellular location is the cytoplasm. Functionally, could be a nuclease involved in processing of the 5'-end of pre-16S rRNA. This Chloroflexus aggregans (strain MD-66 / DSM 9485) protein is Putative pre-16S rRNA nuclease.